The primary structure comprises 689 residues: Methionine--tRNA ligase (689 aa).

The 'HIGH' region signature appears at 15–25; the sequence is PYANGPVHIGH. Residues Cys147, Cys150, Cys160, and Cys163 each contribute to the Zn(2+) site. Residues 342 to 346 carry the 'KMSKS' region motif; that stretch reads KISTS. Thr345 provides a ligand contact to ATP. In terms of domain architecture, tRNA-binding spans 588–689; the sequence is DFAKMDIRVA…AVVNAGSMIG (102 aa).

It belongs to the class-I aminoacyl-tRNA synthetase family. MetG type 1 subfamily. As to quaternary structure, homodimer. Requires Zn(2+) as cofactor.

It is found in the cytoplasm. The enzyme catalyses tRNA(Met) + L-methionine + ATP = L-methionyl-tRNA(Met) + AMP + diphosphate. Functionally, is required not only for elongation of protein synthesis but also for the initiation of all mRNA translation through initiator tRNA(fMet) aminoacylation. This chain is Methionine--tRNA ligase, found in Cytophaga hutchinsonii (strain ATCC 33406 / DSM 1761 / CIP 103989 / NBRC 15051 / NCIMB 9469 / D465).